Reading from the N-terminus, the 914-residue chain is Transcription factor AZF1 (914 aa).

Disordered regions lie at residues 1–63 (MPPP…ESIS), 93–124 (STGGPSSGGAYSNLPRLSTSSTHQPPDLSQIG), and 138–275 (QQLQ…NSNQ). Over residues 13–34 (QAGQNESQNQSSGEAGEQNQEH) the composition is skewed to polar residues. Residues 44–56 (QSQPASSQPQHQQ) are compositionally biased toward low complexity. A Phosphoserine modification is found at Ser-61. Residues 107–116 (PRLSTSSTHQ) show a composition bias toward polar residues. Residues 136–158 (QQQQLQNQHRQQQQQQQQQSHQQ) are polyglutamine domain. Over residues 138 to 158 (QQLQNQHRQQQQQQQQQSHQQ) the composition is skewed to low complexity. The segment covering 164–194 (PSFSTGLTGSSSQYQFLPRNDNTSQPPSKRN) has biased composition (polar residues). Low complexity-rich tracts occupy residues 206–222 (FEFFSMQQSQQPQFQPS) and 245–275 (SNGTNNSGNMNTNADYESFFNTGTNNSNSNQ). Phosphoserine is present on residues Ser-286 and Ser-325. The tract at residues 326-415 (LSVNNKANGD…STDTTSNSRK (90 aa)) is disordered. Residues 359-390 (DSSNNNNNNNNNNNNENNNDNNNDNNDNSINS) are compositionally biased toward low complexity. A polyasparagine domain region spans residues 362–386 (NNNNNNNNNNNNENNNDNNNDNNDN). The span at 391–412 (ATSTNIPNQEDHSLASTDTTSN) shows a compositional bias: polar residues. 4 C2H2-type zinc fingers span residues 593–615 (HECPYCHRLFSQATHLEVHVRSH), 621–643 (FVCDYCGKRFTQGGNLRTHERLH), 649–671 (YSCDICDKKFSRKGNLAAHLVTH), and 677–702 (FVCKLENCNKTFTQLGNMKAHQNRFH). Disordered stretches follow at residues 743-812 (GIKG…SPTQ) and 853-877 (RLGSSSSSNTNNNNSNFSVGAAPGV). Positions 754–770 (KKSTISSPENHPASTIL) are enriched in polar residues. Composition is skewed to low complexity over residues 771–782 (NPNTNANNAIAN), 796–809 (SSSNSNPGSHSMIS), and 856–868 (SSSSSNTNNNNSN).

Its subcellular location is the nucleus. The protein localises to the cytoplasm. The protein resides in the cytosol. Its function is as follows. Transcription factor involved in the diauxic shift. In the presence of glucose, activates carbon and energy metabolism genes, and in te presence of glycerol-lactate, activates genes needed for cell wall maintenance. Binds to DNA elements with the sequence AAAAGAAA (A4GA3), a motif enriched in the promoters of AZF1-sensitive genes. Required for glucose induction of CLN3 transcription. Also required for proper FLO11 expression. May also function as a corepressor. Functionally, as an intrinsically disordered protein, AZF1 is capable of forming the prion [AZF1+] that confers resistance to the drug radicicol in a gain-of-function manner but decreases the expression of AZF1's target genes. The protein is Transcription factor AZF1 of Saccharomyces cerevisiae (strain ATCC 204508 / S288c) (Baker's yeast).